Here is a 191-residue protein sequence, read N- to C-terminus: Hypoxanthine/guanine phosphoribosyltransferase (191 aa).

It belongs to the purine/pyrimidine phosphoribosyltransferase family. Archaeal HPRT subfamily. In terms of assembly, homodimer.

It localises to the cytoplasm. It catalyses the reaction IMP + diphosphate = hypoxanthine + 5-phospho-alpha-D-ribose 1-diphosphate. The catalysed reaction is GMP + diphosphate = guanine + 5-phospho-alpha-D-ribose 1-diphosphate. It functions in the pathway purine metabolism; IMP biosynthesis via salvage pathway; IMP from hypoxanthine: step 1/1. In terms of biological role, catalyzes a salvage reaction resulting in the formation of IMP that is energically less costly than de novo synthesis. This Methanocella paludicola (strain DSM 17711 / JCM 13418 / NBRC 101707 / SANAE) protein is Hypoxanthine/guanine phosphoribosyltransferase.